Here is a 593-residue protein sequence, read N- to C-terminus: Meiosis-specific APC/C activator protein AMA1 (593 aa).

The segment covering 1–11 (MATPHLYHRYN) has biased composition (basic residues). Positions 1–26 (MATPHLYHRYNSKSSNKNINSSGNST) are disordered. Positions 12-25 (SKSSNKNINSSGNS) are enriched in low complexity. The short motif at 29 to 35 (DRFIPKS) is the C-box element. Positions 94 to 109 (SSISSSSESQVTRSGS) are enriched in low complexity. The disordered stretch occupies residues 94-125 (SSISSSSESQVTRSGSARASRNDYSKLTKEQK). A compositionally biased stretch (basic and acidic residues) spans 113–125 (SRNDYSKLTKEQK). WD repeat units lie at residues 226-264 (RNDFYSNLISWSRTTNNVLVGLGCSVYIWSEKEGAVSIL), 271-310 (EKRDLVTCVSFCPYNTYFIVGTKFGRILLYDQKEFFHSSN), 323-364 (ESFK…FPIK), 388-427 (AQAQQVCGISLNEHANLLAVGGNDNSCSLWDISDLDKPIK), 432-474 (PHKA…LLDE), and 525-564 (PNPLRVLSAVISPSSMAICVATNDETIRFYELWNDKEEII).

The protein belongs to the WD repeat CDC20/Fizzy family. As to quaternary structure, interacts with CDC16.

Functionally, activator protein that regulates the ubiquitin ligase activity and substrate specificity of the anaphase promoting complex/cyclosome (APC/C). Required for the ubiquitination and subsequent degradation of the B-type cyclin CLB1 by the APC/C complex during meiosis. Required for meiosis I, late meiotic gene expression and spore wall assembly. In Saccharomyces cerevisiae (strain ATCC 204508 / S288c) (Baker's yeast), this protein is Meiosis-specific APC/C activator protein AMA1 (AMA1).